Reading from the N-terminus, the 291-residue chain is ATP synthase gamma chain (291 aa).

This sequence belongs to the ATPase gamma chain family. F-type ATPases have 2 components, CF(1) - the catalytic core - and CF(0) - the membrane proton channel. CF(1) has five subunits: alpha(3), beta(3), gamma(1), delta(1), epsilon(1). CF(0) has three main subunits: a, b and c.

The protein resides in the cell inner membrane. In terms of biological role, produces ATP from ADP in the presence of a proton gradient across the membrane. The gamma chain is believed to be important in regulating ATPase activity and the flow of protons through the CF(0) complex. In Neisseria meningitidis serogroup A / serotype 4A (strain DSM 15465 / Z2491), this protein is ATP synthase gamma chain.